A 420-amino-acid polypeptide reads, in one-letter code: Bicoumarin synthase ktnC (420 aa).

Cys-362 contacts heme.

This sequence belongs to the cytochrome P450 family. It depends on heme as a cofactor.

The catalysed reaction is 2 7-demethylsiderin + NADPH + O2 = orlandin + NADP(+) + 2 H2O. It participates in secondary metabolite biosynthesis. Its function is as follows. Non-reducing polyketide synthase; part of the gene cluster that mediates the biosynthesis of the bicoumarin kotanin. The non-reducing polyketide synthase ktnS first catalyzes the formation of the pentaketidic 4,7-dihydroxy-5-methylcoumarin from acetyl coenzyme A and 4 malonyl coenzyme A molecules. Further O-methylation by ktnB leads to the formation of 7-demethylsiderin. Then, an oxidative phenol coupling catalyzed by the cytochrome P450 monooxygenase ktnC forms the 8,8'-dimer P-orlandin via dimerization the monomeric precursor, 7-demethylsiderin. P-orlandin is subsequently O-methylated in a stepwise fashion to demethylkotanin and kotanin. The polypeptide is Bicoumarin synthase ktnC (Aspergillus niger (strain ATCC MYA-4892 / CBS 513.88 / FGSC A1513)).